A 155-amino-acid polypeptide reads, in one-letter code: 3-dehydroquinate dehydratase 1 (155 aa).

Tyrosine 28 (proton acceptor) is an active-site residue. Substrate is bound by residues asparagine 80, histidine 86, and aspartate 93. Catalysis depends on histidine 106, which acts as the Proton donor. Substrate is bound by residues 107–108 (VT) and arginine 117.

It belongs to the type-II 3-dehydroquinase family. As to quaternary structure, homododecamer.

It carries out the reaction 3-dehydroquinate = 3-dehydroshikimate + H2O. Its pathway is metabolic intermediate biosynthesis; chorismate biosynthesis; chorismate from D-erythrose 4-phosphate and phosphoenolpyruvate: step 3/7. Catalyzes a trans-dehydration via an enolate intermediate. The chain is 3-dehydroquinate dehydratase 1 (aroQ1) from Bradyrhizobium diazoefficiens (strain JCM 10833 / BCRC 13528 / IAM 13628 / NBRC 14792 / USDA 110).